The primary structure comprises 292 residues: Elongation factor Ts (292 aa).

Positions 82-85 are involved in Mg(2+) ion dislocation from EF-Tu; it reads TDFV.

This sequence belongs to the EF-Ts family.

It is found in the cytoplasm. Its function is as follows. Associates with the EF-Tu.GDP complex and induces the exchange of GDP to GTP. It remains bound to the aminoacyl-tRNA.EF-Tu.GTP complex up to the GTP hydrolysis stage on the ribosome. The sequence is that of Elongation factor Ts from Legionella pneumophila subsp. pneumophila (strain Philadelphia 1 / ATCC 33152 / DSM 7513).